A 124-amino-acid polypeptide reads, in one-letter code: Fluoride-specific ion channel FluC (124 aa).

4 consecutive transmembrane segments (helical) span residues 5–25 (FLQVALGGALGSAARYGVNIL), 35–55 (LGTLSVNIAGCLAMGLLAALL), 63–83 (LAPFLLTGMLGGFTTFSAFAL), and 98–118 (LGYVLGSVVLSLAAVIAGLTV). Residues Gly-73 and Thr-76 each coordinate Na(+).

Belongs to the fluoride channel Fluc/FEX (TC 1.A.43) family.

The protein localises to the cell inner membrane. It catalyses the reaction fluoride(in) = fluoride(out). With respect to regulation, na(+) is not transported, but it plays an essential structural role and its presence is essential for fluoride channel function. Fluoride-specific ion channel. Important for reducing fluoride concentration in the cell, thus reducing its toxicity. The polypeptide is Fluoride-specific ion channel FluC (Paracoccus denitrificans (strain Pd 1222)).